Reading from the N-terminus, the 312-residue chain is MNITFLGTSSGVPSLTRNVSSLALKLSQSSEVWLFDCGEGTQHQIMKSNIKSSQIKKIFITHMHGDHIYGLPGLLATLGLSGNSNGIEIYGPLGLRSFISSALSSSFCKLSFPLHFVEVENFASENKILFENNKLKVNCACLKHKIPAYGYRVSEKDKPGIFDIKKAESMKIAPGPIYSKLQQGKEVLLPDGRTVNGKEFCGPPRKGESFVYCTDTVFSESAVSLSKNADLLVHESTFSQEDESMAYEKLHSTTIMAAKTALLSNTKKLIITHLSPRYTSKNSITPSDLLKEAQKVFPNTHLAKDFLVADIK.

Residues histidine 62, histidine 64, aspartate 66, histidine 67, histidine 144, aspartate 215, and histidine 273 each contribute to the Zn(2+) site. Aspartate 66 (proton acceptor) is an active-site residue.

Belongs to the RNase Z family. Homodimer. Requires Zn(2+) as cofactor.

The catalysed reaction is Endonucleolytic cleavage of RNA, removing extra 3' nucleotides from tRNA precursor, generating 3' termini of tRNAs. A 3'-hydroxy group is left at the tRNA terminus and a 5'-phosphoryl group is left at the trailer molecule.. Zinc phosphodiesterase, which displays some tRNA 3'-processing endonuclease activity. Probably involved in tRNA maturation, by removing a 3'-trailer from precursor tRNA. This chain is Ribonuclease Z, found in Prochlorococcus marinus (strain MIT 9312).